The primary structure comprises 178 residues: N-alpha-acetyltransferase 20 (178 aa).

The 156-residue stretch at 2-157 (TTLRAFTCDD…DAYDMRKALS (156 aa)) folds into the N-acetyltransferase domain.

Belongs to the acetyltransferase family. ARD1 subfamily. Component of the N-terminal acetyltransferase B (NatB) complex which is composed of NAA20 and NAA25.

Its subcellular location is the cytoplasm. The protein resides in the nucleus. It catalyses the reaction N-terminal L-methionyl-L-asparaginyl-[protein] + acetyl-CoA = N-terminal N(alpha)-acetyl-L-methionyl-L-asparaginyl-[protein] + CoA + H(+). The enzyme catalyses N-terminal L-methionyl-L-glutaminyl-[protein] + acetyl-CoA = N-terminal N(alpha)-acetyl-L-methionyl-L-glutaminyl-[protein] + CoA + H(+). It carries out the reaction N-terminal L-methionyl-L-aspartyl-[protein] + acetyl-CoA = N-terminal N(alpha)-acetyl-L-methionyl-L-aspartyl-[protein] + CoA + H(+). The catalysed reaction is N-terminal L-methionyl-L-glutamyl-[protein] + acetyl-CoA = N-terminal N(alpha)-acetyl-L-methionyl-L-glutamyl-[protein] + CoA + H(+). Its function is as follows. Catalytic subunit of the NatB complex which catalyzes acetylation of the N-terminal methionine residues of peptides beginning with Met-Asp, Met-Glu, Met-Asn and Met-Gln. Proteins with cell cycle functions are overrepresented in the pool of NatB substrates. Required for maintaining the structure and function of actomyosin fibers and for proper cellular migration. The protein is N-alpha-acetyltransferase 20 (NAA20) of Homo sapiens (Human).